Reading from the N-terminus, the 453-residue chain is Pup--protein ligase (453 aa).

Glu9 is a Mg(2+) binding site. Arg53 is an ATP binding site. Residue Tyr55 participates in Mg(2+) binding. The active-site Proton acceptor is Asp57. Glu63 contributes to the Mg(2+) binding site. Residues Thr66 and Trp420 each coordinate ATP.

This sequence belongs to the Pup ligase/Pup deamidase family. Pup-conjugating enzyme subfamily.

It carries out the reaction ATP + [prokaryotic ubiquitin-like protein]-L-glutamate + [protein]-L-lysine = ADP + phosphate + N(6)-([prokaryotic ubiquitin-like protein]-gamma-L-glutamyl)-[protein]-L-lysine.. The protein operates within protein degradation; proteasomal Pup-dependent pathway. It participates in protein modification; protein pupylation. Catalyzes the covalent attachment of the prokaryotic ubiquitin-like protein modifier Pup to the proteasomal substrate proteins, thereby targeting them for proteasomal degradation. This tagging system is termed pupylation. The ligation reaction involves the side-chain carboxylate of the C-terminal glutamate of Pup and the side-chain amino group of a substrate lysine. This Streptomyces avermitilis (strain ATCC 31267 / DSM 46492 / JCM 5070 / NBRC 14893 / NCIMB 12804 / NRRL 8165 / MA-4680) protein is Pup--protein ligase.